A 125-amino-acid chain; its full sequence is Small ribosomal subunit protein uS13 (125 aa).

The tract at residues 93–125 (RKGLPVRGQRTKTNARTRKGPKRTVAGKKKAGR) is disordered.

The protein belongs to the universal ribosomal protein uS13 family. As to quaternary structure, part of the 30S ribosomal subunit. Forms a loose heterodimer with protein S19. Forms two bridges to the 50S subunit in the 70S ribosome.

Its function is as follows. Located at the top of the head of the 30S subunit, it contacts several helices of the 16S rRNA. In the 70S ribosome it contacts the 23S rRNA (bridge B1a) and protein L5 of the 50S subunit (bridge B1b), connecting the 2 subunits; these bridges are implicated in subunit movement. Contacts the tRNAs in the A and P-sites. The chain is Small ribosomal subunit protein uS13 from Paenarthrobacter aurescens (strain TC1).